We begin with the raw amino-acid sequence, 604 residues long: 2-isopropylmalate synthase 2, mitochondrial (604 aa).

The transit peptide at 1–50 (MVKHSFIALAEHASKLRRSIPPVKLTYKNMLRDPSVKYRAFAPPKMVKRI) directs the protein to the mitochondrion. One can recognise a Pyruvate carboxyltransferase domain in the interval 60–335 (PRWLSTDLRD…SPNLDFSDLT (276 aa)). The a divalent metal cation site is built by D69, H274, H276, and N310.

Belongs to the alpha-IPM synthase/homocitrate synthase family. LeuA type 2 subfamily. Homodimer. The cofactor is a divalent metal cation.

The protein resides in the mitochondrion. The catalysed reaction is 3-methyl-2-oxobutanoate + acetyl-CoA + H2O = (2S)-2-isopropylmalate + CoA + H(+). Its pathway is amino-acid biosynthesis; L-leucine biosynthesis; L-leucine from 3-methyl-2-oxobutanoate: step 1/4. Its function is as follows. Catalyzes the condensation of the acetyl group of acetyl-CoA with 3-methyl-2-oxobutanoate (2-oxoisovalerate) to form 3-carboxy-3-hydroxy-4-methylpentanoate (2-isopropylmalate). Redundant to LEU4, responsible for about 20% of alpha-IPMS activity. Involved in leucine synthesis. This Saccharomyces cerevisiae (strain ATCC 204508 / S288c) (Baker's yeast) protein is 2-isopropylmalate synthase 2, mitochondrial.